We begin with the raw amino-acid sequence, 187 residues long: TATA-box-binding protein (187 aa).

2 consecutive repeat copies span residues 10 to 86 and 101 to 179.

This sequence belongs to the TBP family.

Functionally, general factor that plays a role in the activation of archaeal genes transcribed by RNA polymerase. Binds specifically to the TATA box promoter element which lies close to the position of transcription initiation. This Natronomonas pharaonis (strain ATCC 35678 / DSM 2160 / CIP 103997 / JCM 8858 / NBRC 14720 / NCIMB 2260 / Gabara) (Halobacterium pharaonis) protein is TATA-box-binding protein.